The sequence spans 407 residues: Phosphopentomutase (407 aa).

Mn(2+) contacts are provided by D10, D306, H311, D347, H348, and H359.

The protein belongs to the phosphopentomutase family. It depends on Mn(2+) as a cofactor.

It is found in the cytoplasm. It catalyses the reaction 2-deoxy-alpha-D-ribose 1-phosphate = 2-deoxy-D-ribose 5-phosphate. It carries out the reaction alpha-D-ribose 1-phosphate = D-ribose 5-phosphate. It functions in the pathway carbohydrate degradation; 2-deoxy-D-ribose 1-phosphate degradation; D-glyceraldehyde 3-phosphate and acetaldehyde from 2-deoxy-alpha-D-ribose 1-phosphate: step 1/2. Functionally, isomerase that catalyzes the conversion of deoxy-ribose 1-phosphate (dRib-1-P) and ribose 1-phosphate (Rib-1-P) to deoxy-ribose 5-phosphate (dRib-5-P) and ribose 5-phosphate (Rib-5-P), respectively. The polypeptide is Phosphopentomutase (Escherichia coli O127:H6 (strain E2348/69 / EPEC)).